We begin with the raw amino-acid sequence, 1354 residues long: RNA-directed RNA polymerase VP1 (1354 aa).

The enzyme catalyses RNA(n) + a ribonucleoside 5'-triphosphate = RNA(n+1) + diphosphate. Functionally, RNA-directed RNA polymerase that is involved in transcription and genome replication. Following infection, it catalyzes the synthesis of fully conservative plus strands. After core assembly, which consists in recruitment of one capped plus-strand for each genomic segments and polymerase complexes, the polymerase switches mode and catalyzes the synthesis of complementary minus-strands. This is RNA-directed RNA polymerase VP1 from Cryphonectria parasitica mycoreovirus 1 (strain 9B21) (CpMYRV-1).